The chain runs to 185 residues: Ribosome-recycling factor (185 aa).

Belongs to the RRF family.

It localises to the cytoplasm. Responsible for the release of ribosomes from messenger RNA at the termination of protein biosynthesis. May increase the efficiency of translation by recycling ribosomes from one round of translation to another. This Thermotoga petrophila (strain ATCC BAA-488 / DSM 13995 / JCM 10881 / RKU-1) protein is Ribosome-recycling factor.